The following is a 443-amino-acid chain: Diels-Alderase poxQ (443 aa).

A signal peptide spans 1–23 (MARIPLEFLSITLPVLLLAYCLA). 3 N-linked (GlcNAc...) asparagine glycosylation sites follow: N78, N97, and N145.

The protein belongs to the Diels-Alderase family.

Its pathway is secondary metabolite biosynthesis. Functionally, diels-Alderase; part of the gene cluster that mediates the biosynthesis of oxaleimides, cytotoxic compounds containing an unusual disubstituted succinimide moiety. The first step of the pathway is provided by the HR-PKS poxF that serves in a new mode of collaborative biosynthesis with the PKS-NRPS poxE, by providing the olefin containing amino acid substrate via the synthesis of an ACP-bound dec-4-enoate. The cytochrome P450 monooxygenase poxM-catalyzed oxidation at the alpha-position creates the enzyme-bound 2-hydroxydec-4-enoyl-ACP thioester, which may be prone to spontaneous hydrolysis to yield 2-hydroxydec-4-enoic acid due to increased electrophilicity of the carbonyl. 2-hydroxydec-4-enoic acid can then be further oxidized by poxM to yield the alpha-ketoacid 2-oxodec-4-enoicacid, which is reductively aminated by the aminotransferase poxL to yield (S,E)-2-aminodec-4-enoic acid. The Hybrid PKS-NRPS synthetase poxE then performs condensation between the octaketide product of its PKS modules and the amino group of (S,E)-2-aminodec-4-enoic acid which is activated and incorporated by the adenylation domain. The resulting aminoacyl product can be cyclized by the Diels-Alderase PoxQ and reductively released by the reductive (R) domain of poxE to yield an aldehyde intermediate. The released aldehyde is then substrate for a Knoevenagel condensation by the hydrolyase poxO followed by an oxidation at the 5-position of the pyrrolidone ring. The presence of the olefin from the amino acid building block allows for migration of the substituted allyl group to occur. This allylic transposition reaction takes place in a conjugate addition, semipinacol-like fashion to yield a succinimide intermediate. Iterative two-electron oxidations of the C7 methyl of the succinimide intermediate to the carboxylic acid can be catalyzed by one of two remaining cytochrome P450 monooxygenasess poxC or poxD to yield oxaleimide A. Subsequent oxidation yields the maleimide scaffold oxaleimide I. Both oxaleimide A and oxaleimide I can undergo oxidative modifications in the decalin ring to yield the series of products oxaleimides B to H. The protein is Diels-Alderase poxQ of Penicillium oxalicum.